A 431-amino-acid polypeptide reads, in one-letter code: Glutamate-1-semialdehyde 2,1-aminomutase (431 aa).

K269 bears the N6-(pyridoxal phosphate)lysine mark.

Belongs to the class-III pyridoxal-phosphate-dependent aminotransferase family. HemL subfamily. In terms of assembly, homodimer. It depends on pyridoxal 5'-phosphate as a cofactor.

The protein localises to the cytoplasm. The enzyme catalyses (S)-4-amino-5-oxopentanoate = 5-aminolevulinate. It participates in porphyrin-containing compound metabolism; protoporphyrin-IX biosynthesis; 5-aminolevulinate from L-glutamyl-tRNA(Glu): step 2/2. It functions in the pathway porphyrin-containing compound metabolism; chlorophyll biosynthesis. The protein is Glutamate-1-semialdehyde 2,1-aminomutase of Chlorobaculum tepidum (strain ATCC 49652 / DSM 12025 / NBRC 103806 / TLS) (Chlorobium tepidum).